We begin with the raw amino-acid sequence, 274 residues long: 2,3,4,5-tetrahydropyridine-2,6-dicarboxylate N-succinyltransferase (274 aa).

Arg106 and Asp143 together coordinate substrate.

Belongs to the transferase hexapeptide repeat family. As to quaternary structure, homotrimer.

Its subcellular location is the cytoplasm. The enzyme catalyses (S)-2,3,4,5-tetrahydrodipicolinate + succinyl-CoA + H2O = (S)-2-succinylamino-6-oxoheptanedioate + CoA. Its pathway is amino-acid biosynthesis; L-lysine biosynthesis via DAP pathway; LL-2,6-diaminopimelate from (S)-tetrahydrodipicolinate (succinylase route): step 1/3. This chain is 2,3,4,5-tetrahydropyridine-2,6-dicarboxylate N-succinyltransferase, found in Rickettsia typhi (strain ATCC VR-144 / Wilmington).